The primary structure comprises 97 residues: MPRSLRKGPYVYYKLQRKVDALNESDEKKVIKTWSRDSIITPDFVGHTFAVHNGHQFIPVYVTENMVGHKLGEFAPTRTFTEHSQAKVDQRIRKPGQ.

This sequence belongs to the universal ribosomal protein uS19 family.

Its function is as follows. Protein S19 forms a complex with S13 that binds strongly to the 16S ribosomal RNA. This Salinibacter ruber (strain DSM 13855 / M31) protein is Small ribosomal subunit protein uS19.